A 568-amino-acid polypeptide reads, in one-letter code: MSVSTFNRCWSKVILETLTRHGVKHFCIAPGSRSTPLTLEANRLQEQRRALCHTHFDERGLGFFALGLAKSSQTPVAIIVTSGTAAANLYPAIIEARQTGDNLIVLTADRPDELIECGANQAILQQNMFAGYPVASVNLPRPSQDYIVSWLISTLDQACHQQAQQAGVIHINVPFAEPLYDADEDEIDVHPWLAPVQRWLNHNKPWADHQALQEEVVMHEHWDNWRTKRGVIVAGRLTQEQSMGITAWANTMGWVVLTDIQSGVEPSLPYADIWLANKTVREKLLQADLVIQLGYAFVSKRINQFLADFKGEYWIVDESAHRVDPYHHIHTRFTAKVHHWLRAHPPLRQKPWLLEPLALSKFCASFIEQQVGGNLNEASLAHHIERILPNNGILFLGNSLFVRLVDALGKLPEGYPVITNRGASGIDGLLATAAGVGMGSNQPVVAMIGDVSALYDLNSLALFKNVNQPTIIFLINNNGGAIFDMLPVESSVKSEFYRMPHHTEFSQAASMFDLKYARPYTWADLSSVLKQAYSRKEATVIEIKVGPMDGSNTYKRLIEQISYAVIGA.

This sequence belongs to the TPP enzyme family. MenD subfamily. Homodimer. It depends on Mg(2+) as a cofactor. Requires Mn(2+) as cofactor. The cofactor is thiamine diphosphate.

The catalysed reaction is isochorismate + 2-oxoglutarate + H(+) = 5-enolpyruvoyl-6-hydroxy-2-succinyl-cyclohex-3-ene-1-carboxylate + CO2. The protein operates within quinol/quinone metabolism; 1,4-dihydroxy-2-naphthoate biosynthesis; 1,4-dihydroxy-2-naphthoate from chorismate: step 2/7. It participates in quinol/quinone metabolism; menaquinone biosynthesis. In terms of biological role, catalyzes the thiamine diphosphate-dependent decarboxylation of 2-oxoglutarate and the subsequent addition of the resulting succinic semialdehyde-thiamine pyrophosphate anion to isochorismate to yield 2-succinyl-5-enolpyruvyl-6-hydroxy-3-cyclohexene-1-carboxylate (SEPHCHC). The polypeptide is 2-succinyl-5-enolpyruvyl-6-hydroxy-3-cyclohexene-1-carboxylate synthase (Mannheimia succiniciproducens (strain KCTC 0769BP / MBEL55E)).